Reading from the N-terminus, the 152-residue chain is MRIGYGEDSHRLEEGRPLYLCGLLIPSPVGALAHSDGDAALHALTDALLSAYGLGDIGLLFPDTDPRWRGERSEVFLREALRLVEARGARLLQASLVLTLDRPKLGPHRKALVDSLARLLRLPQDRIGLTFKTSEGLAPSHVQARAVVLLDG.

Residues Asp8 and His10 each contribute to the a divalent metal cation site. 4-CDP-2-C-methyl-D-erythritol 2-phosphate contacts are provided by residues 8 to 10 (DSH) and 34 to 35 (HS). His42 serves as a coordination point for a divalent metal cation. 4-CDP-2-C-methyl-D-erythritol 2-phosphate contacts are provided by residues 56-58 (DIG) and 61-65 (FPDTD).

The protein belongs to the IspF family. In terms of assembly, homotrimer. The cofactor is a divalent metal cation.

The catalysed reaction is 4-CDP-2-C-methyl-D-erythritol 2-phosphate = 2-C-methyl-D-erythritol 2,4-cyclic diphosphate + CMP. It participates in isoprenoid biosynthesis; isopentenyl diphosphate biosynthesis via DXP pathway; isopentenyl diphosphate from 1-deoxy-D-xylulose 5-phosphate: step 4/6. In terms of biological role, involved in the biosynthesis of isopentenyl diphosphate (IPP) and dimethylallyl diphosphate (DMAPP), two major building blocks of isoprenoid compounds. Catalyzes the conversion of 4-diphosphocytidyl-2-C-methyl-D-erythritol 2-phosphate (CDP-ME2P) to 2-C-methyl-D-erythritol 2,4-cyclodiphosphate (ME-CPP) with a corresponding release of cytidine 5-monophosphate (CMP). This Thermus thermophilus (strain ATCC BAA-163 / DSM 7039 / HB27) protein is 2-C-methyl-D-erythritol 2,4-cyclodiphosphate synthase.